The primary structure comprises 235 residues: MSKQLIYSGKAKDIYTTEDENLIISTYKDQATAFNGVKKEQIAGKGVLNNQISSFIFEKLNVAGVATHFVEKLSDTEQLNKKVKIIPLEVVLRNYTAGSFSKRFGVDEGIALETPIVEFYYKNDDLDDPFINDEHVKFLQIAGDQQIAYLKEETRRINELLKVWFAEIGLKLIDFKLEFGFDKDGKIILADEFSPDNCRLWDADGNHMDKDVFRRGLGELTDVYEIVWEKLQELK.

This sequence belongs to the SAICAR synthetase family.

It catalyses the reaction 5-amino-1-(5-phospho-D-ribosyl)imidazole-4-carboxylate + L-aspartate + ATP = (2S)-2-[5-amino-1-(5-phospho-beta-D-ribosyl)imidazole-4-carboxamido]succinate + ADP + phosphate + 2 H(+). It functions in the pathway purine metabolism; IMP biosynthesis via de novo pathway; 5-amino-1-(5-phospho-D-ribosyl)imidazole-4-carboxamide from 5-amino-1-(5-phospho-D-ribosyl)imidazole-4-carboxylate: step 1/2. The protein is Phosphoribosylaminoimidazole-succinocarboxamide synthase (purC) of Streptococcus pneumoniae serotype 4 (strain ATCC BAA-334 / TIGR4).